We begin with the raw amino-acid sequence, 90 residues long: Small ribosomal subunit protein bS18B (90 aa).

The protein belongs to the bacterial ribosomal protein bS18 family. In terms of assembly, part of the 30S ribosomal subunit. Forms a tight heterodimer with protein bS6.

In terms of biological role, binds as a heterodimer with protein bS6 to the central domain of the 16S rRNA, where it helps stabilize the platform of the 30S subunit. In Roseiflexus sp. (strain RS-1), this protein is Small ribosomal subunit protein bS18B.